Consider the following 318-residue polypeptide: Solute carrier family 25 member 34 (318 aa).

Solcar repeat units lie at residues 18 to 111 (VSPA…ACQA), 115 to 208 (QQPG…AKAW), and 218 to 309 (DSWL…LRKL). The next 6 helical transmembrane spans lie at 21–41 (AVDLVLGASACCLACVFTNPL), 59–79 (TYPRPYRGFVSSVTAVARADG), 112–134 (GLTQQPGGTVVAGAVAGALGAFV), 184–205 (VGAAVPRVTVGSAAQLATFTSA), 220–240 (WLATLAGGMISSIAVVAVMAP), and 292–315 (LGPHTILSMFFWDELRKLALRAQH).

This sequence belongs to the mitochondrial carrier (TC 2.A.29) family.

The protein resides in the mitochondrion inner membrane. The catalysed reaction is a dicarboxylate(in) + sulfate(out) = a dicarboxylate(out) + sulfate(in). Putative antiporter that exchanges dicarboxylates and sulfur oxoanions across the inner membrane of mitochondria. The protein is Solute carrier family 25 member 34 (Slc25a34) of Rattus norvegicus (Rat).